A 302-amino-acid chain; its full sequence is Large ribosomal subunit protein uL18 (302 aa).

Belongs to the universal ribosomal protein uL18 family. As to quaternary structure, component of the large ribosomal subunit (LSU).

The protein resides in the cytoplasm. It is found in the nucleus. Functionally, component of the ribosome, a large ribonucleoprotein complex responsible for the synthesis of proteins in the cell. The small ribosomal subunit (SSU) binds messenger RNAs (mRNAs) and translates the encoded message by selecting cognate aminoacyl-transfer RNA (tRNA) molecules. The large subunit (LSU) contains the ribosomal catalytic site termed the peptidyl transferase center (PTC), which catalyzes the formation of peptide bonds, thereby polymerizing the amino acids delivered by tRNAs into a polypeptide chain. The nascent polypeptides leave the ribosome through a tunnel in the LSU and interact with protein factors that function in enzymatic processing, targeting, and the membrane insertion of nascent chains at the exit of the ribosomal tunnel. The protein is Large ribosomal subunit protein uL18 (RPL5) of Cucumis sativus (Cucumber).